The primary structure comprises 465 residues: Respiratory transcription factor ZNF1 (465 aa).

The zn(2)-C6 fungal-type DNA-binding region spans 8-34 (CDCCCIRRVKCDRKKPCKCCLQHNLQC).

This sequence belongs to the MAL13 family.

It localises to the nucleus. Functionally, transcription factor that regulates respiratory growth and plays a critical role in stress adaptation during non-fermentative growth. Binds to promoters of genes involved in non-fermentative metabolism, including processes such as gluconeogenesis (PCK1, FBP1 and MDH2), glyoxylate shunt (MLS1 and ICL1) and the tricarboxylic acid cycle (ACO1). Plays a role in maintaining mitochondrial morphology and function. Also plays a role in tolerance to pH and osmotic stress, especially during the oxidative metabolism. The chain is Respiratory transcription factor ZNF1 from Saccharomyces cerevisiae (strain ATCC 204508 / S288c) (Baker's yeast).